A 367-amino-acid chain; its full sequence is WD repeat-containing protein 31 (367 aa).

WD repeat units lie at residues 53–90, 94–132, 137–175, 179–217, 221–264, 269–311, and 315–353; these read AFQE…AYNW, NVVK…MWDL, QPRQ…LWDV, QSVE…LWDS, QVAH…LWDL, NRIC…IWNQ, and ACLF…LLRM.

This chain is WD repeat-containing protein 31 (WDR31), found in Homo sapiens (Human).